The sequence spans 344 residues: Biotin synthase (344 aa).

One can recognise a Radical SAM core domain in the interval 40–267 (AQVQVSTLLS…KSMVRLSAGR (228 aa)). Positions 55, 59, and 62 each coordinate [4Fe-4S] cluster. 4 residues coordinate [2Fe-2S] cluster: cysteine 99, cysteine 130, cysteine 190, and arginine 262.

The protein belongs to the radical SAM superfamily. Biotin synthase family. As to quaternary structure, homodimer. [4Fe-4S] cluster serves as cofactor. [2Fe-2S] cluster is required as a cofactor.

It catalyses the reaction (4R,5S)-dethiobiotin + (sulfur carrier)-SH + 2 reduced [2Fe-2S]-[ferredoxin] + 2 S-adenosyl-L-methionine = (sulfur carrier)-H + biotin + 2 5'-deoxyadenosine + 2 L-methionine + 2 oxidized [2Fe-2S]-[ferredoxin]. The protein operates within cofactor biosynthesis; biotin biosynthesis; biotin from 7,8-diaminononanoate: step 2/2. Catalyzes the conversion of dethiobiotin (DTB) to biotin by the insertion of a sulfur atom into dethiobiotin via a radical-based mechanism. This Xanthomonas euvesicatoria pv. vesicatoria (strain 85-10) (Xanthomonas campestris pv. vesicatoria) protein is Biotin synthase.